Consider the following 506-residue polypeptide: Procardosin-B (506 aa).

A signal peptide spans 1 to 24 (MGTPIKASLLALFLFFLLSPTAFS). Residues 25 to 70 (VSNGGLLRVGLKKRKVDRLDQLRAHGVHMLGNARKDFGFRRTLSDS) constitute a propeptide that is removed on maturation. The region spanning 85-503 (YYGEIGIGTP…DYGKLRVGFA (419 aa)) is the Peptidase A1 domain. Residue D103 is part of the active site. A disulfide bond links C116 and C122. N-linked (GlcNAc...) asparagine glycosylation is found at N139 and N252. The cysteines at positions 281 and 285 are disulfide-linked. The active site involves D290. The Saposin B-type domain occupies 315 to 417 (VLNQQCKTLV…NEVCDQLPTS (103 aa)). Disulfide bonds link C320–C411, C345–C383, C351–C380, and C425–C462. The N-linked (GlcNAc...) asparagine glycan is linked to N397.

Belongs to the peptidase A1 family. Heterodimer of a light chain and a heavy chain. An intermediate form is produced first, and undergoes proteolytic processing to remove the internal plant-specific insert (PSI) and the propeptide. Detected in pistils, but not in seeds, bracts, midribs, roots, leaves or stamen extracts. Detected in seeds. In stigmas and styles, detected in the transmitting tissue and in contiguous subepidermal layers at the longitudenal grooves of the stigma (at protein level).

The protein resides in the microsome membrane. The protein localises to the protein storage vacuole. It is found in the secreted. Its subcellular location is the cell wall. It localises to the extracellular space. The protein resides in the extracellular matrix. Its activity is regulated as follows. Inhibited by the specific aspartic proteinase inhibitors diazoacetyl-noleucine methyl ester and pepstatin. Functionally, aspartic protease. Cleaves alpha-lactalbumin but not beta-lactoglobulin. The chain is Procardosin-B from Cynara cardunculus (Cardoon).